The chain runs to 134 residues: Profilin-2 (134 aa).

A disulfide bridge connects residues Cys-13 and Cys-118. The Involved in PIP2 interaction signature appears at 84–100 (AVIRGKKGSGGITIKKT). Position 114 is a phosphothreonine (Thr-114).

Belongs to the profilin family. As to quaternary structure, occurs in many kinds of cells as a complex with monomeric actin in a 1:1 ratio. In terms of processing, phosphorylated by MAP kinases.

The protein resides in the cytoplasm. It is found in the cytoskeleton. Binds to actin and affects the structure of the cytoskeleton. At high concentrations, profilin prevents the polymerization of actin, whereas it enhances it at low concentrations. The chain is Profilin-2 from Olea europaea (Common olive).